A 416-amino-acid chain; its full sequence is Serine hydroxymethyltransferase (416 aa).

(6S)-5,6,7,8-tetrahydrofolate-binding positions include L121 and 125–127; that span reads GHL. At K229 the chain carries N6-(pyridoxal phosphate)lysine.

Belongs to the SHMT family. As to quaternary structure, homodimer. Requires pyridoxal 5'-phosphate as cofactor.

The protein resides in the cytoplasm. The catalysed reaction is (6R)-5,10-methylene-5,6,7,8-tetrahydrofolate + glycine + H2O = (6S)-5,6,7,8-tetrahydrofolate + L-serine. It participates in one-carbon metabolism; tetrahydrofolate interconversion. Its pathway is amino-acid biosynthesis; glycine biosynthesis; glycine from L-serine: step 1/1. In terms of biological role, catalyzes the reversible interconversion of serine and glycine with tetrahydrofolate (THF) serving as the one-carbon carrier. This reaction serves as the major source of one-carbon groups required for the biosynthesis of purines, thymidylate, methionine, and other important biomolecules. Also exhibits THF-independent aldolase activity toward beta-hydroxyamino acids, producing glycine and aldehydes, via a retro-aldol mechanism. In Aromatoleum aromaticum (strain DSM 19018 / LMG 30748 / EbN1) (Azoarcus sp. (strain EbN1)), this protein is Serine hydroxymethyltransferase.